The sequence spans 253 residues: Probable transcriptional regulatory protein Tlet_1011 (253 aa).

The protein belongs to the TACO1 family.

The protein localises to the cytoplasm. This Pseudothermotoga lettingae (strain ATCC BAA-301 / DSM 14385 / NBRC 107922 / TMO) (Thermotoga lettingae) protein is Probable transcriptional regulatory protein Tlet_1011.